The sequence spans 433 residues: Glucose-1-phosphate adenylyltransferase (433 aa).

Alpha-D-glucose 1-phosphate is bound by residues Y117, G182, 197-198 (EK), and S215.

Belongs to the bacterial/plant glucose-1-phosphate adenylyltransferase family. Homotetramer.

It carries out the reaction alpha-D-glucose 1-phosphate + ATP + H(+) = ADP-alpha-D-glucose + diphosphate. It functions in the pathway glycan biosynthesis; glycogen biosynthesis. Involved in the biosynthesis of ADP-glucose, a building block required for the elongation reactions to produce glycogen. Catalyzes the reaction between ATP and alpha-D-glucose 1-phosphate (G1P) to produce pyrophosphate and ADP-Glc. The sequence is that of Glucose-1-phosphate adenylyltransferase from Nitrosomonas europaea (strain ATCC 19718 / CIP 103999 / KCTC 2705 / NBRC 14298).